The following is a 179-amino-acid chain: UPF0303 protein P4H10.12 (179 aa).

The protein belongs to the UPF0303 family.

This is UPF0303 protein P4H10.12 from Schizosaccharomyces pombe (strain 972 / ATCC 24843) (Fission yeast).